Reading from the N-terminus, the 317-residue chain is Probable cell division protein WhiA (317 aa).

Residues 275–308 constitute a DNA-binding region (H-T-H motif); sequence SLKELGEMLVPKVGKSGVNHRMRKIDELAEKLEE.

It belongs to the WhiA family.

Its function is as follows. Involved in cell division and chromosome segregation. The protein is Probable cell division protein WhiA of Desulfitobacterium hafniense (strain Y51).